The primary structure comprises 133 residues: Capsid protein (133 aa).

It belongs to the Leviviricetes capsid protein family. As to quaternary structure, homodimer. The homodimers binds to the viral RNA via an operator hairpin, but also to many other RNA sequences in the viral genome; this interaction probably shifts the virus from the replicative to the assembly phase and ensures specific encapsidation of the viral genome. Interacts with the maturation protein A2.

It localises to the virion. In terms of biological role, capsid protein self-assembles to form an icosahedral capsid with a T=3 symmetry, about 26 nm in diameter, and consisting of 89 capsid proteins dimers (178 capsid proteins). Involved in viral genome encapsidation through the interaction between a capsid protein dimer and the multiple packaging signals present in the RNA genome. Binding of the capsid proteins to the viral RNA induces a conformational change required for efficient T=3 shell formation. The capsid also contains 1 copy of the A2 maturation protein. Acts as a translational repressor of viral replicase synthesis late in infection. This latter function is the result of capsid protein interaction with an RNA hairpin which contains the replicase ribosome-binding site. The sequence is that of Capsid protein from Escherichia virus Qbeta (Bacteriophage Q-beta).